The following is a 222-amino-acid chain: uncharacterized protein (222 aa).

A disordered region spans residues 142–222; the sequence is ARRGGCVHPP…LPDPPSAGHL (81 aa). The span at 160-169 shows a compositional bias: low complexity; it reads QSRSISSRRA. Residues 182 to 196 show a composition bias toward basic residues; that stretch reads PRRRPHRHRTRPQTR.

This sequence belongs to the Rv1128c/1148c/1588c/1702c/1945/3466 family.

This is an uncharacterized protein from Mycobacterium tuberculosis (strain ATCC 25618 / H37Rv).